Here is a 366-residue protein sequence, read N- to C-terminus: Beta sliding clamp (366 aa).

The protein belongs to the beta sliding clamp family. In terms of assembly, forms a ring-shaped head-to-tail homodimer around DNA which binds and tethers DNA polymerases and other proteins to the DNA. The DNA replisome complex has a single clamp-loading complex (3 tau and 1 each of delta, delta', psi and chi subunits) which binds 3 Pol III cores (1 core on the leading strand and 2 on the lagging strand) each with a beta sliding clamp dimer. Additional proteins in the replisome are other copies of gamma, psi and chi, Ssb, DNA helicase and RNA primase.

The protein localises to the cytoplasm. Its function is as follows. Confers DNA tethering and processivity to DNA polymerases and other proteins. Acts as a clamp, forming a ring around DNA (a reaction catalyzed by the clamp-loading complex) which diffuses in an ATP-independent manner freely and bidirectionally along dsDNA. Initially characterized for its ability to contact the catalytic subunit of DNA polymerase III (Pol III), a complex, multichain enzyme responsible for most of the replicative synthesis in bacteria; Pol III exhibits 3'-5' exonuclease proofreading activity. The beta chain is required for initiation of replication as well as for processivity of DNA replication. The sequence is that of Beta sliding clamp (dnaN) from Buchnera aphidicola subsp. Acyrthosiphon pisum (strain APS) (Acyrthosiphon pisum symbiotic bacterium).